The chain runs to 143 residues: Sporulation-specific cell division protein SsgB (143 aa).

The protein belongs to the SsgA family. As to quaternary structure, interacts with SsgA. Interacts with FtsZ (via N-terminus).

The protein localises to the cell septum. In terms of biological role, involved in sporulation-specific cell division. Required for early stages of sporulation. Important in the process of growth cessation prior to sporulation-specific cell division. Recruits cell division protein FtsZ to the future septum sites and tethers the contractile ring structure (Z ring) to the cytoplasmic membrane during sporulation. Stimulates polymerization and filament length of FtsZ in vitro. The protein is Sporulation-specific cell division protein SsgB of Salinispora tropica (strain ATCC BAA-916 / DSM 44818 / JCM 13857 / NBRC 105044 / CNB-440).